Consider the following 115-residue polypeptide: Large ribosomal subunit protein P1 (115 aa).

Over residues 56–73 (QAAAAPVPASGGAAAPAE) the composition is skewed to low complexity. The segment at 56–115 (QAAAAPVPASGGAAAPAEGDADEADEADEEAEEEAADDGGDDDDDEDDEASGEGLGELFG) is disordered. Residues 74–106 (GDADEADEADEEAEEEAADDGGDDDDDEDDEAS) are compositionally biased toward acidic residues.

The protein belongs to the eukaryotic ribosomal protein P1/P2 family. Part of the 50S ribosomal subunit. Homodimer, it forms part of the ribosomal stalk which helps the ribosome interact with GTP-bound translation factors. Forms a heptameric uL10/P0(P1)2(P1)2(P1)2 complex, where uL10/P0 forms an elongated spine to which the P1 dimers bind in a sequential fashion.

Forms part of the ribosomal stalk, playing a central role in the interaction of the ribosome with GTP-bound translation factors. The sequence is that of Large ribosomal subunit protein P1 from Haloarcula marismortui (strain ATCC 43049 / DSM 3752 / JCM 8966 / VKM B-1809) (Halobacterium marismortui).